We begin with the raw amino-acid sequence, 78 residues long: Small ribosomal subunit protein uS17 (78 aa).

The protein belongs to the universal ribosomal protein uS17 family. In terms of assembly, part of the 30S ribosomal subunit.

Its function is as follows. One of the primary rRNA binding proteins, it binds specifically to the 5'-end of 16S ribosomal RNA. The sequence is that of Small ribosomal subunit protein uS17 from Pelagibacter ubique (strain HTCC1062).